Here is a 327-residue protein sequence, read N- to C-terminus: o-succinylbenzoate synthase (327 aa).

K110 acts as the Proton donor in catalysis. Residues D138, E165, and D188 each coordinate Mg(2+). K212 serves as the catalytic Proton acceptor.

The protein belongs to the mandelate racemase/muconate lactonizing enzyme family. MenC type 1 subfamily. A divalent metal cation is required as a cofactor.

It catalyses the reaction (1R,6R)-6-hydroxy-2-succinyl-cyclohexa-2,4-diene-1-carboxylate = 2-succinylbenzoate + H2O. The protein operates within quinol/quinone metabolism; 1,4-dihydroxy-2-naphthoate biosynthesis; 1,4-dihydroxy-2-naphthoate from chorismate: step 4/7. It functions in the pathway quinol/quinone metabolism; menaquinone biosynthesis. Functionally, converts 2-succinyl-6-hydroxy-2,4-cyclohexadiene-1-carboxylate (SHCHC) to 2-succinylbenzoate (OSB). The protein is o-succinylbenzoate synthase of Mycobacterium ulcerans (strain Agy99).